Consider the following 61-residue polypeptide: Large ribosomal subunit protein uL30 (61 aa).

It belongs to the universal ribosomal protein uL30 family. In terms of assembly, part of the 50S ribosomal subunit.

The polypeptide is Large ribosomal subunit protein uL30 (Neisseria gonorrhoeae (strain ATCC 700825 / FA 1090)).